The chain runs to 884 residues: Valine--tRNA ligase (884 aa).

Residues 43 to 53 (PNVTGSLHIGH) carry the 'HIGH' region motif. The 'KMSKS' region signature appears at 530 to 534 (KMSKS). Lysine 533 is a binding site for ATP. The stretch at 817 to 884 (VIDLDAERGR…KLKAALERLM (68 aa)) forms a coiled coil.

Belongs to the class-I aminoacyl-tRNA synthetase family. ValS type 1 subfamily. As to quaternary structure, monomer.

Its subcellular location is the cytoplasm. It catalyses the reaction tRNA(Val) + L-valine + ATP = L-valyl-tRNA(Val) + AMP + diphosphate. Its function is as follows. Catalyzes the attachment of valine to tRNA(Val). As ValRS can inadvertently accommodate and process structurally similar amino acids such as threonine, to avoid such errors, it has a 'posttransfer' editing activity that hydrolyzes mischarged Thr-tRNA(Val) in a tRNA-dependent manner. This chain is Valine--tRNA ligase, found in Zymomonas mobilis subsp. mobilis (strain ATCC 31821 / ZM4 / CP4).